Consider the following 156-residue polypeptide: MPRKGPVPRREVLPDPIYNSRLASRFVNRLMYDGKKGVAEKIFYGALENLSEKTGEEPLRAFERALDNVKPQFEVKARRVGGATYQVPMEVRSDRQISLSIRWLITYARSRGEKGMVNKLAAEFLDAFNNRGGAVKKKEDTHRMAEANKAFAHYRW.

This sequence belongs to the universal ribosomal protein uS7 family. Part of the 30S ribosomal subunit. Contacts proteins S9 and S11.

In terms of biological role, one of the primary rRNA binding proteins, it binds directly to 16S rRNA where it nucleates assembly of the head domain of the 30S subunit. Is located at the subunit interface close to the decoding center, probably blocks exit of the E-site tRNA. This chain is Small ribosomal subunit protein uS7, found in Lawsonia intracellularis (strain PHE/MN1-00).